The primary structure comprises 759 residues: MKKKIESYQGAAGGWGAVKSVANAVRKQMDIRHDVIAMFDMNKPEGFDCPGCAWPDPKNSASFDICENGAKAIAWEVTDKQVNASFFAENTVQSLLTWGDHELEAAGRLTQPLKYDAVSDCYKPLSWQQAFDEIGARLQSYSDPNQVEFYTSGRTSNEAAFLYQLFAREYGSNNFPDCSNMCHEPTSVGLAASIGVGKGTVLLEDFEKCDLVICIGHNPGTNHPRMLTSLRALVKRGAKMIAINPLQERGLERFTAPQNPFEMLTNSETQLASAYYNVRIGGDMALLKGMMRLLIERDDAASAAGRPSLLDDEFIQTHTVGFDELRRDVLNSEWKDIERISGLSQTQIAELADAYAAAERTIICYGMGITQHEHGTQNVQQLVNLLLMKGNIGKPGAGICPLRGHSNVQGDRTVGITEKPSAEFLARLGERYGFPPPHAPGHAAIASMQAICTGQARALICMGGNFALAMPDREASAVPLTQLDLAVHVATKLNRSHLLTARHSYILPVLGRSEIDMQKSGAQAVTVEDSMSMIHASRGVLKPAGVMLKSECAVVAGIAQAALPQSVVAWEYLVEDYDRIRNDIEAVLPEFADYNQRIRHPGGFHLINAAAERRWMTPSGKANFITSKGLLEDPSSAFNSKLVMATVRSHDQYNTTIYGMDDRYRGVFGQRDVVFMSAKQAKICRVKNGERVNLIALTPDGKRSSRRMDRLKVVIYPMADRSLVTYFPESNHMLTLDNHDPLSGIPGYKSIPVELEPSN.

2 residues coordinate [4Fe-4S] cluster: cysteine 49 and cysteine 52.

This sequence belongs to the prokaryotic molybdopterin-containing oxidoreductase family. [4Fe-4S] cluster is required as a cofactor. Mo-bis(molybdopterin guanine dinucleotide) serves as cofactor.

Functionally, probably involved in acid resistance. The protein is Protein YdeP (ydeP) of Shigella flexneri.